We begin with the raw amino-acid sequence, 379 residues long: Anthranilate O-methyltransferase 3 (379 aa).

Over residues 1 to 10 (MPMRIERDLH) the composition is skewed to basic and acidic residues. The tract at residues 1 to 21 (MPMRIERDLHMATGNGETSYT) is disordered. S-adenosyl-L-homocysteine is bound at residue Tyr20. Residue Gln27 participates in anthranilate binding. S-adenosyl-L-homocysteine is bound by residues Cys61, Asn66, Asp100, Leu101, Ser143, and Phe144. The anthranilate site is built by His164 and Trp165. Mg(2+) is bound by residues Glu265 and Phe267.

The protein belongs to the methyltransferase superfamily. Type-7 methyltransferase family. SABATH subfamily.

The catalysed reaction is anthranilate + S-adenosyl-L-methionine = O-methyl anthranilate + S-adenosyl-L-homocysteine. It carries out the reaction benzoate + S-adenosyl-L-methionine = methyl benzoate + S-adenosyl-L-homocysteine. It catalyses the reaction salicylate + S-adenosyl-L-methionine = methyl salicylate + S-adenosyl-L-homocysteine. In terms of biological role, methyltransferase involved in the biosynthesis of methyl anthranilate in response to stresses. Utilizes anthranilic acid as substrate. Produces exclusively the O-methyl ester. Can also use benzoic acid as substrate. Low activity with salicylic acid. The protein is Anthranilate O-methyltransferase 3 (AAMT3) of Zea mays (Maize).